The sequence spans 788 residues: Cap-specific mRNA (nucleoside-2'-O-)-methyltransferase 1 (788 aa).

The G-patch domain occupies 25-71; it reads YSNKAMEMMKKMGYENDKGLGKSNQGRLEPIIAVQQDGRRGFGLKLD. Residues 143–147 and Arg158 each bind substrate; that span reads KTVFD. The RrmJ-type SAM-dependent 2'-O-MTase domain maps to 171–384; the sequence is IFLNRAAVKM…ERYLVCKYKR (214 aa). Asn174 is an S-adenosyl-L-methionine binding site. Lys179 is an active-site residue. An S-adenosyl-L-methionine-binding site is contributed by 215–221; sequence CAGPGGF. Asp298 is a catalytic residue. 308–310 contacts substrate; the sequence is NIQ. Residue Lys338 is the Proton acceptor of the active site. Asn373 lines the substrate pocket.

Interacts (via C-terminus) with r2d2 (via C-terminus).

Its subcellular location is the nucleus. The protein localises to the cytoplasm. It catalyses the reaction a 5'-end (N(7)-methyl 5'-triphosphoguanosine)-ribonucleoside in mRNA + S-adenosyl-L-methionine = a 5'-end (N(7)-methyl 5'-triphosphoguanosine)-(2'-O-methyl-ribonucleoside) in mRNA + S-adenosyl-L-homocysteine + H(+). Functionally, S-adenosyl-L-methionine-dependent methyltransferase that mediates mRNA cap1 2'-O-ribose methylation to the 5'-cap structure of mRNAs. Methylates the ribose of the first nucleotide of a m(7)GpppG-capped mRNA to produce m(7)GpppNmp (cap1). Positively regulates the Ago2-dependent small RNA pathway, with roles in both siRNA biogenesis and RISC assembly. Involved in facilitating conversion of pre-RISC into holo-RISC, possibly by promoting the unwinding of Ago2-bound siRNA duplexes and thus the retention of the guide strand in holo-RISC. The sequence is that of Cap-specific mRNA (nucleoside-2'-O-)-methyltransferase 1 from Drosophila melanogaster (Fruit fly).